Consider the following 607-residue polypeptide: Elongation factor 4 (607 aa).

In terms of domain architecture, tr-type G spans 11-193 (SKIRNFSIIA…QIVEKVPAPT (183 aa)). Residues 23-28 (DHGKST) and 140-143 (NKID) each bind GTP.

Belongs to the TRAFAC class translation factor GTPase superfamily. Classic translation factor GTPase family. LepA subfamily.

Its subcellular location is the cell membrane. It carries out the reaction GTP + H2O = GDP + phosphate + H(+). Its function is as follows. Required for accurate and efficient protein synthesis under certain stress conditions. May act as a fidelity factor of the translation reaction, by catalyzing a one-codon backward translocation of tRNAs on improperly translocated ribosomes. Back-translocation proceeds from a post-translocation (POST) complex to a pre-translocation (PRE) complex, thus giving elongation factor G a second chance to translocate the tRNAs correctly. Binds to ribosomes in a GTP-dependent manner. The sequence is that of Elongation factor 4 from Bacillus cereus (strain AH820).